The sequence spans 503 residues: Legumin J (503 aa).

An N-terminal signal peptide occupies residues 1–22 (MSKPFLSLLSLSLLLFASACLA). Intrachain disulfides connect Cys-33–Cys-66 and Cys-109–Cys-329. Residues 38 to 257 (INALEPDHRV…TFNTEEDTAK (220 aa)) form the Cupin type-1 1 domain. Disordered regions lie at residues 111-140 (ETYEEPRSSQSRQESRQQQGDSHQKVRRFR), 185-235 (FYLG…EGNS), and 253-323 (EDTA…RKNG). Positions 118–129 (SSQSRQESRQQQ) are enriched in low complexity. 2 stretches are compositionally biased toward basic and acidic residues: residues 254–268 (DTAKRLRSPRDERSQ) and 282–300 (KGKEEEEKEQSHSHSHREE). Residues 301–312 (KEEEEEEEEDEE) show a composition bias toward acidic residues. A compositionally biased stretch (basic and acidic residues) spans 313–323 (EKQRSEERKNG). Residues 335-482 (ENIADAARAD…AFGLRQRQVT (148 aa)) enclose the Cupin type-1 2 domain.

The protein belongs to the 11S seed storage protein (globulins) family. As to quaternary structure, hexamer; each subunit is composed of an acidic and a basic chain derived from a single precursor and linked by a disulfide bond.

In terms of biological role, this protein found in the seeds of many leguminous and non-leguminous plants is the source of sulfur-containing amino acids in seed meals. The protein is Legumin J (LEGJ) of Pisum sativum (Garden pea).